Reading from the N-terminus, the 1036-residue chain is Cellulose synthase-like protein D1 (1036 aa).

Positions 1–99 (MASSPPKKTL…GGGDGPKMGN (99 aa)) are disordered. Composition is skewed to polar residues over residues 9–19 (TLNSQSSSLSR) and 69–80 (NQPAGSSGSTSE). The segment covering 86–95 (NRGGGGGDGP) has biased composition (gly residues). A run of 2 helical transmembrane segments spans residues 178–198 (ILSP…FFLW) and 208–228 (AMWL…SWIL). Residue Asp-308 is part of the active site. The interval 626–665 (AMHVRTQSQASQTSQASDLESDTQPLNDDPDLGLPKKFGN) is disordered. The segment covering 631–642 (TQSQASQTSQAS) has biased composition (low complexity). The active site involves Asp-741. Helical transmembrane passes span 817-837 (IYPF…LCLF), 848-868 (IHFL…SLLE), 895-915 (LAAV…SFTL), 938-958 (GLFI…VIGA), 962-982 (IYSV…SLWV), and 1002-1022 (TIVY…WITI).

It belongs to the glycosyltransferase 2 family. Plant cellulose synthase-like D subfamily.

It is found in the golgi apparatus membrane. Its function is as follows. Thought to be a Golgi-localized beta-glycan synthase that polymerize the backbones of noncellulosic polysaccharides (hemicelluloses) of plant cell wall. This chain is Cellulose synthase-like protein D1 (CSLD1), found in Arabidopsis thaliana (Mouse-ear cress).